The primary structure comprises 69 residues: Conotoxin Eb6.1 (69 aa).

The N-terminal stretch at 1–17 is a signal peptide; that stretch reads VLIIAVLFLTACQLTTA. The propeptide occupies 18–41; that stretch reads ETYSRGRQKHRARRSTDKNSKWTR. 3 disulfide bridges follow: cysteine 43–cysteine 57, cysteine 50–cysteine 61, and cysteine 56–cysteine 68.

This sequence belongs to the conotoxin O1 superfamily. In terms of tissue distribution, expressed by the venom duct.

It is found in the secreted. This chain is Conotoxin Eb6.1 (E1), found in Conus ebraeus (Hebrew cone).